A 138-amino-acid polypeptide reads, in one-letter code: Acidic phospholipase A2 BITP01A (138 aa).

Positions 1-16 are cleaved as a signal peptide; the sequence is MRTLWIMAVLLVGVEG. Cystine bridges form between Cys-42/Cys-131, Cys-44/Cys-60, Cys-59/Cys-111, Cys-65/Cys-138, Cys-66/Cys-104, Cys-73/Cys-97, and Cys-91/Cys-102. Tyr-43, Gly-45, and Gly-47 together coordinate Ca(2+). His-63 is an active-site residue. Asp-64 lines the Ca(2+) pocket. Asp-105 is a catalytic residue.

It depends on Ca(2+) as a cofactor. Expressed by the venom gland.

The protein localises to the secreted. The enzyme catalyses a 1,2-diacyl-sn-glycero-3-phosphocholine + H2O = a 1-acyl-sn-glycero-3-phosphocholine + a fatty acid + H(+). Snake venom phospholipase A2 (PLA2) that induces edema in mice, produces neuromuscular blockade in chick biventer cervicis, increases CK release and produces myonecrosis. PLA2 catalyzes the calcium-dependent hydrolysis of the 2-acyl groups in 3-sn-phosphoglycerides. This Bothrops insularis (Golden lancehead) protein is Acidic phospholipase A2 BITP01A.